The chain runs to 219 residues: Claudin-3 (219 aa).

Residues 1-8 (MSMGLEIT) are Cytoplasmic-facing. The helical transmembrane segment at 9–29 (GTSLAVLGWLCTIVCCALPMW) threads the bilayer. Residues 30-80 (RVSAFIGSSIITAQITWEGLWMNCVVQSTGQMQCKMYDSLLALPQDLQAAR) lie on the Extracellular side of the membrane. Residues 81–101 (ALIVVSILLAAFGLLVALVGA) traverse the membrane as a helical segment. Over 102–115 (QCTNCVQDETAKAK) the chain is Cytoplasmic. The helical transmembrane segment at 116 to 136 (ITIVAGVLFLLAALLTLVPVS) threads the bilayer. Residues 137-159 (WSANTIIRDFYNPLVPEAQKREM) lie on the Extracellular side of the membrane. Residues 160 to 180 (GAGLYVGWAAAALQLLGGALL) form a helical membrane-spanning segment. The Cytoplasmic segment spans residues 181-219 (CCSCPPRDKYAPTKILYSAPRSTGPGTGTGTAYDRKDYV). Tyr-197 is subject to Phosphotyrosine. Ser-198 carries the post-translational modification Phosphoserine. Positions 218 to 219 (YV) are interactions with TJP1, TJP2 and TJP3.

Belongs to the claudin family. In terms of assembly, can form homo- and heteropolymers with other CLDN. Homopolymers interact with CLDN1 and CLDN2 homopolymers. Interacts in cis (within the same plasma membrane) with CLDN19. Directly interacts with TJP1/ZO-1, TJP2/ZO-2 and TJP3/ZO-3. (Microbial infection) Interacts with Clostridium perfringens enterotoxin CPE; the interaction may disrupt claudin assembly in tight junctions. As to expression, expressed in the lung. Expressed at high levels in the liver and at lower levels, in kidney and testis.

It localises to the cell junction. It is found in the tight junction. Its subcellular location is the cell membrane. Its function is as follows. Plays a major role in tight junction-specific obliteration of the intercellular space, through calcium-independent cell-adhesion activity. The sequence is that of Claudin-3 (Cldn3) from Mus musculus (Mouse).